The primary structure comprises 227 residues: SPbeta prophage-derived uncharacterized membrane protein YomJ (227 aa).

2 helical membrane-spanning segments follow: residues 16 to 36 (LFFL…IVGL) and 131 to 151 (GIVA…GLSA).

It localises to the cell membrane. The chain is SPbeta prophage-derived uncharacterized membrane protein YomJ (yomJ) from Bacillus subtilis (strain 168).